The primary structure comprises 443 residues: Probable glycine dehydrogenase (decarboxylating) subunit 1 (443 aa).

This sequence belongs to the GcvP family. N-terminal subunit subfamily. As to quaternary structure, the glycine cleavage system is composed of four proteins: P, T, L and H. In this organism, the P 'protein' is a heterodimer of two subunits.

The enzyme catalyses N(6)-[(R)-lipoyl]-L-lysyl-[glycine-cleavage complex H protein] + glycine + H(+) = N(6)-[(R)-S(8)-aminomethyldihydrolipoyl]-L-lysyl-[glycine-cleavage complex H protein] + CO2. Its function is as follows. The glycine cleavage system catalyzes the degradation of glycine. The P protein binds the alpha-amino group of glycine through its pyridoxal phosphate cofactor; CO(2) is released and the remaining methylamine moiety is then transferred to the lipoamide cofactor of the H protein. This chain is Probable glycine dehydrogenase (decarboxylating) subunit 1, found in Maridesulfovibrio salexigens (strain ATCC 14822 / DSM 2638 / NCIMB 8403 / VKM B-1763) (Desulfovibrio salexigens).